A 329-amino-acid polypeptide reads, in one-letter code: Isopentenyl-diphosphate delta-isomerase (329 aa).

4 to 5 (RK) lines the substrate pocket. Residues 59–61 (AMT), Ser-89, and Asn-116 contribute to the FMN site. Residue Gln-146 participates in substrate binding. Residue Glu-147 participates in Mg(2+) binding. FMN-binding positions include Lys-178, Ser-203, Thr-208, 252–254 (GVR), and 273–274 (SR).

The protein belongs to the IPP isomerase type 2 family. As to quaternary structure, homooctamer. Dimer of tetramers. FMN is required as a cofactor. Requires NADPH as cofactor. It depends on Mg(2+) as a cofactor.

The protein resides in the cytoplasm. The catalysed reaction is isopentenyl diphosphate = dimethylallyl diphosphate. Involved in the biosynthesis of isoprenoids. Catalyzes the 1,3-allylic rearrangement of the homoallylic substrate isopentenyl (IPP) to its allylic isomer, dimethylallyl diphosphate (DMAPP). The chain is Isopentenyl-diphosphate delta-isomerase from Streptococcus pyogenes serotype M28 (strain MGAS6180).